The sequence spans 217 residues: Growth factor receptor-bound protein 2 (217 aa).

Residue Met-1 is modified to N-acetylmethionine. One can recognise an SH3 1 domain in the interval 1–58 (MEAIAKYDFKATADDELSFKRGDILKVLNEECDQNWYKAELNGKDGFIPKNYIEMKPH). Residues Lys-6, Lys-50, and Lys-109 each carry the N6-acetyllysine modification. The 93-residue stretch at 60 to 152 (WFFGKIPRAK…NQQIFLRDIE (93 aa)) folds into the SH2 domain. A Glycyl lysine isopeptide (Lys-Gly) (interchain with G-Cter in ubiquitin) cross-link involves residue Lys-109. The SH3 2 domain occupies 156 to 215 (QQPTYVQALFDFDPQEDGELGFRRGDFIHVMDNSDPNWWKGACHGQTGMFPRNYVTPVNR). Tyr-209 carries the post-translational modification Phosphotyrosine. Thr-211 bears the Phosphothreonine mark.

This sequence belongs to the GRB2/sem-5/DRK family. Homodimer. Associates (via SH2 domain) with activated EGF and PDGF receptors (tyrosine phosphorylated). Interacts with PDGFRA (tyrosine phosphorylated); the interaction may be indirect. Also associates to other cellular Tyr-phosphorylated proteins such as SIT1, IRS1, IRS2, IRS4, SHC and LNK; probably via the concerted action of both its SH2 and SH3 domains. It also seems to interact with RAS in the signaling pathway leading to DNA synthesis. Interacts with SOS1. Forms a complex with MUC1 and SOS1, through interaction of the SH3 domains with SOS1 and the SH2 domain with phosphorylated MUC1. Interacts with phosphorylated MET. Interacts with phosphorylated TOM1L1. Interacts with the phosphorylated C-terminus of SH2B2. Interacts with phosphorylated SIT1, LAX1, LAT, LAT2 and LIME1 upon TCR and/or BCR activation. Interacts with NISCH, PTPNS1 and REPS2. Interacts with syntrophin SNTA1. Interacts (via SH3 domains) with REPS1. Interacts (via SH3 domains) with PIK3C2B. Interacts with CBL and CBLB. Interacts with AJUBA and CLNK. Interacts (via SH2 domain) with TEK/TIE2 (tyrosine phosphorylated). Interacts with SHB, INPP5D/SHIP1, SKAP1 and SKAP2. Interacts with PTPN11. Interacts with PRNP. Interacts with RALGPS1. Interacts with HCST. Interacts with KDR. Interacts with FLT1 (tyrosine-phosphorylated). Interacts with GAPT and PTPRE. Interacts (via SH2 domain) with KIF26A. Interacts (via SH3 2) with GAB2. Interacts with ADAM15. Interacts with THEMIS2. Interacts (via SH2 domain) with AXL (phosphorylated). Interacts (via SH2 domain) with KIT (phosphorylated). Interacts with PTPRJ and BCR. Interacts with PTPN23. Interacts with FLT4 (tyrosine phosphorylated). Interacts with EPHB1 and SHC1; activates the MAPK/ERK cascade to regulate cell migration. Part of a complex including TNK2, GRB2, LTK and one receptor tyrosine kinase (RTK) such as AXL and PDGFRL, in which GRB2 promotes RTK recruitment by TNK2. Interacts (via SH2 domain) with CSF1R (tyrosine phosphorylated). Interacts with ERBB4. Interacts with NTRK1 (phosphorylated upon ligand-binding). Interacts with PTK2/FAK1 (tyrosine phosphorylated). Interacts with PTK2B/PYK2 (tyrosine phosphorylated). Interacts (via SH3 domains) with GAREM1 isoform 1 (via proline-rich domain and tyrosine phosphorylated); the interaction occurs upon EGF stimulation. Interacts with DAB2. Interacts with TESPA1. Interacts with PLCG1, LAT and THEMIS upon TCR activation in thymocytes; the association is weaker in the absence of TESPA1. Interacts with CD28. Interacts with RAB13; may recruit RAB13 to the leading edge of migrating endothelial cells where it can activate RHOA. Interacts with ASAP3 (phosphorylated form). Interacts (via SH2 domain) with PTPRH (phosphorylated form). Interacts with PTPRO (phosphorylated form). Interacts with PTPRB (phosphorylated form). Interacts (via SH3 domain 2) with PRR14 (via proline-rich region). Interacts with FCRL6 (tyrosine phosphorylated form). Interacts with RHEX (via tyrosine-phosphorylated form). Interacts with DENND2B. Interacts with SPRY2. Interacts with LRRC8A. Interacts with PEAK1. Interacts with CD28. Interacts with FCRL1. Interacts with PCNA. Interacts with CD19. Interacts with BECN1. Interacts with RAD51; the interaction inhibits RAD51 ATPase to stabilize RAD51-DNA complex at stalled replication forks. Interacts with MRE11; this interaction recruits MRE11 to the DNA damage sites. Interacts with RIPK1 ans SQSTM1; these interactions play a critical role in regulating programmed necrosis. Interacts with AGO2; this interaction is important for the formation of a ternary complex containing GRB2, AGO2 and DICER1. Interacts with TIGIT; this interaction inhibits PI3K and MAPK signaling cascades. Interacts with CD226; this interaction leads to activation of VAV1, PI3K and PLCG1. In terms of assembly, interacts (via SH2-domain) with SCIMP; this interaction is dependent on phosphorylation of SCIMP 'Tyr-69'. As to quaternary structure, interacts with SOS1; this interaction competes with GRB2 to bind SOS1 via its N-terminal SH3 domain. (Microbial infection) Interacts (via SH3 domain) with hepatitis E virus/HEV ORF3 protein. In terms of assembly, (Microbial infection) Interacts with hepatitis C virus/HCV protein NS5A via its SH3 domains. As to quaternary structure, (Microbial infection) Interacts with herpes simplex virus 1 protein UL46. (Microbial infection) Interacts with B19 parvovirus protein 11K. Phosphorylation of Tyr-209 in the C-terminal SH3 domain reduces its binding to SOS1. Post-translationally, ubiquitinated by RNF173, leading to proteasomal degradation and inhibition of the RAF/MEK/ERK pathway. In the nucleus, polyubiquitinated by RBBP6 at Lys-109 at DNA damage sites.

The protein resides in the nucleus. The protein localises to the cytoplasm. Its subcellular location is the endosome. It localises to the golgi apparatus. Its function is as follows. Non-enzymatic adapter protein that plays a pivotal role in precisely regulated signaling cascades from cell surface receptors to cellular responses, including signaling transduction and gene expression. Thus, participates in many biological processes including regulation of innate and adaptive immunity, autophagy, DNA repair or necroptosis. Controls signaling complexes at the T-cell antigen receptor to facilitate the activation, differentiation, and function of T-cells. Mechanistically, engagement of the TCR leads to phosphorylation of the adapter protein LAT, which serves as docking site for GRB2. In turn, GRB2 establishes a a connection with SOS1 that acts as a guanine nucleotide exchange factor and serves as a critical regulator of KRAS/RAF1 leading to MAPKs translocation to the nucleus and activation. Functions also a role in B-cell activation by amplifying Ca(2+) mobilization and activation of the ERK MAP kinase pathway upon recruitment to the phosphorylated B-cell antigen receptor (BCR). Plays a role in switching between autophagy and programmed necrosis upstream of EGFR by interacting with components of necrosomes including RIPK1 and with autophagy regulators SQSTM1 and BECN1. Regulates miRNA biogenesis by forming a functional ternary complex with AGO2 and DICER1. Functions in the replication stress response by protecting DNA at stalled replication forks from MRE11-mediated degradation. Mechanistically, inhibits RAD51 ATPase activity to stabilize RAD51 on stalled replication forks. Additionally, directly recruits and later releases MRE11 at DNA damage sites during the homology-directed repair (HDR) process. Functionally, does not bind to phosphorylated epidermal growth factor receptor (EGFR) but inhibits EGF-induced transactivation of a RAS-responsive element. Acts as a dominant negative protein over GRB2 and by suppressing proliferative signals, may trigger active programmed cell death. Mechanistically, inhibits RAS-ERK signaling and downstream cell proliferation by competing with GRB2 for SOS1 binding and thus by regulating SOS1 membrane recruitment. This is Growth factor receptor-bound protein 2 (GRB2) from Homo sapiens (Human).